We begin with the raw amino-acid sequence, 237 residues long: Ribosomal RNA small subunit methyltransferase G (237 aa).

S-adenosyl-L-methionine contacts are provided by residues glycine 78, phenylalanine 83, 129 to 130 (AE), and arginine 148.

Belongs to the methyltransferase superfamily. RNA methyltransferase RsmG family.

It is found in the cytoplasm. Functionally, specifically methylates the N7 position of a guanine in 16S rRNA. The chain is Ribosomal RNA small subunit methyltransferase G from Streptococcus pyogenes serotype M18 (strain MGAS8232).